Consider the following 72-residue polypeptide: Protein kish-A (72 aa).

The N-terminal stretch at 1–26 (MSAIFNFQSLLIVILLLICTCAYLRA) is a signal peptide. Over 27–53 (LVPNLLDKNKTGILGIFWKCARIGERK) the chain is Extracellular. Asparagine 35 carries an N-linked (GlcNAc...) asparagine glycan. Residues 54–71 (SPYVAVCCVVMAFSILFM) form a helical membrane-spanning segment. A topological domain (cytoplasmic) is located at residue glutamine 72.

Belongs to the KISH family.

It is found in the golgi apparatus membrane. Involved in the early part of the secretory pathway. The polypeptide is Protein kish-A (tmem167a) (Xenopus tropicalis (Western clawed frog)).